A 326-amino-acid chain; its full sequence is Apolipoprotein F (326 aa).

The first 35 residues, 1–35, serve as a signal peptide directing secretion; sequence MTGLCGYSAPDMRGLRLIMIPVELLLCYLLLHPVD. Positions 36 to 164 are excised as a propeptide; the sequence is ATSYGKQTNV…EQQSTGRVGR (129 aa). Asn118 carries N-linked (GlcNAc...) asparagine glycosylation. Residue Thr274 is glycosylated (O-linked (GalNAc...) threonine). Phosphoserine is present on Ser323.

It belongs to the apolipoprotein F family. In terms of processing, O-glycosylated with core 1 or possibly core 8 glycans. As to expression, expressed by the liver and secreted in plasma.

The protein resides in the secreted. In terms of biological role, minor apolipoprotein that associates with LDL. Inhibits cholesteryl ester transfer protein (CETP) activity and appears to be an important regulator of cholesterol transport. Also associates to a lesser degree with VLDL, Apo-AI and Apo-AII. This chain is Apolipoprotein F (APOF), found in Homo sapiens (Human).